The sequence spans 361 residues: S-adenosylmethionine decarboxylase proenzyme (361 aa).

Residues glutamate 8 and glutamate 11 contribute to the active site. Serine 68 acts as the Schiff-base intermediate with substrate; via pyruvic acid in catalysis. Position 68 is a pyruvic acid (Ser); by autocatalysis (serine 68). Cysteine 82 acts as the Proton donor; for catalytic activity in catalysis. Residues serine 234 and histidine 247 each act as proton acceptor; for processing activity in the active site. The segment at 341 to 361 (SCGSPRSTLHRCWSETENEEE) is disordered.

It belongs to the eukaryotic AdoMetDC family. The cofactor is pyruvate. In terms of processing, is synthesized initially as an inactive proenzyme. Formation of the active enzyme involves a self-maturation process in which the active site pyruvoyl group is generated from an internal serine residue via an autocatalytic post-translational modification. Two non-identical subunits are generated from the proenzyme in this reaction, and the pyruvate is formed at the N-terminus of the alpha chain, which is derived from the carboxyl end of the proenzyme. The post-translation cleavage follows an unusual pathway, termed non-hydrolytic serinolysis, in which the side chain hydroxyl group of the serine supplies its oxygen atom to form the C-terminus of the beta chain, while the remainder of the serine residue undergoes an oxidative deamination to produce ammonia and the pyruvoyl group blocking the N-terminus of the alpha chain.

It carries out the reaction S-adenosyl-L-methionine + H(+) = S-adenosyl 3-(methylsulfanyl)propylamine + CO2. It participates in amine and polyamine biosynthesis; S-adenosylmethioninamine biosynthesis; S-adenosylmethioninamine from S-adenosyl-L-methionine: step 1/1. The chain is S-adenosylmethionine decarboxylase proenzyme (SAMDC) from Helianthus annuus (Common sunflower).